The primary structure comprises 136 residues: Secreted RxLR effector protein 10 (136 aa).

Residues 1–22 (MRVLNFVLTTTVVLLTSSEGIA) form the signal peptide. The RxLR-dEER motif lies at 42–56 (RSLRATENPGSDESR). The interval 42-78 (RSLRATENPGSDESRLNEKDTGFDPDGSSSKEDEDIG) is disordered. Positions 53 to 63 (DESRLNEKDTG) are enriched in basic and acidic residues.

The protein belongs to the RxLR effector family.

The protein resides in the secreted. It localises to the host cytoplasm. The protein localises to the host nucleus. In terms of biological role, effector that acts as a broad suppressor of cell death to interrupt plant immunity. Inhibits cell death induced by cell death-inducing proteins, including the PAMP elicitor INF1 from P.infestans. The sequence is that of Secreted RxLR effector protein 10 from Plasmopara viticola (Downy mildew of grapevine).